We begin with the raw amino-acid sequence, 1241 residues long: ATP-dependent helicase/nuclease subunit A (1241 aa).

A UvrD-like helicase ATP-binding domain is found at 12–485; sequence SQWTDDQWKA…IDLAKNFRSR (474 aa). Position 33 to 40 (33 to 40) interacts with ATP; sequence AAAGSGKT. In terms of domain architecture, UvrD-like helicase C-terminal spans 505–805; the sequence is GEIDYDADAE…RIMTIHKSKG (301 aa).

Belongs to the helicase family. AddA subfamily. As to quaternary structure, heterodimer of AddA and AddB/RexB. It depends on Mg(2+) as a cofactor.

The catalysed reaction is Couples ATP hydrolysis with the unwinding of duplex DNA by translocating in the 3'-5' direction.. It carries out the reaction ATP + H2O = ADP + phosphate + H(+). The heterodimer acts as both an ATP-dependent DNA helicase and an ATP-dependent, dual-direction single-stranded exonuclease. Recognizes the chi site generating a DNA molecule suitable for the initiation of homologous recombination. The AddA nuclease domain is required for chi fragment generation; this subunit has the helicase and 3' -&gt; 5' nuclease activities. This is ATP-dependent helicase/nuclease subunit A from Bacillus cereus (strain ATCC 14579 / DSM 31 / CCUG 7414 / JCM 2152 / NBRC 15305 / NCIMB 9373 / NCTC 2599 / NRRL B-3711).